The primary structure comprises 527 residues: Phosphoenolpyruvate carboxykinase (ATP) (527 aa).

Positions 54, 190, and 196 each coordinate substrate. Residues Lys196, His215, and 231-239 contribute to the ATP site; that span reads GLSGTGKTT. Residues Lys196 and His215 each coordinate Mn(2+). Residue Asp252 participates in Mn(2+) binding. Residues Glu280, Arg317, 436-437, and Thr442 each bind ATP; that span reads RI. Arg317 contacts substrate.

This sequence belongs to the phosphoenolpyruvate carboxykinase (ATP) family. It depends on Mn(2+) as a cofactor.

It localises to the cytoplasm. It catalyses the reaction oxaloacetate + ATP = phosphoenolpyruvate + ADP + CO2. The protein operates within carbohydrate biosynthesis; gluconeogenesis. In terms of biological role, involved in the gluconeogenesis. Catalyzes the conversion of oxaloacetate (OAA) to phosphoenolpyruvate (PEP) through direct phosphoryl transfer between the nucleoside triphosphate and OAA. The sequence is that of Phosphoenolpyruvate carboxykinase (ATP) from Oceanobacillus iheyensis (strain DSM 14371 / CIP 107618 / JCM 11309 / KCTC 3954 / HTE831).